Reading from the N-terminus, the 137-residue chain is MLAPKKTKFRKMQKGRLRGPALRGASIDFGEIGIKALEHGKLTSQQIESARIAIMRHIKRGGKVWIRVFPDRVRTEKPAEVRQGKGKGSPVGWFAPVKPGRVLYEIKGVDIETAKEALTRAQHKLPIKTKIVVKEGL.

This sequence belongs to the universal ribosomal protein uL16 family. As to quaternary structure, part of the 50S ribosomal subunit.

Binds 23S rRNA and is also seen to make contacts with the A and possibly P site tRNAs. This is Large ribosomal subunit protein uL16 from Solidesulfovibrio magneticus (strain ATCC 700980 / DSM 13731 / RS-1) (Desulfovibrio magneticus).